Reading from the N-terminus, the 741-residue chain is uncharacterized protein (741 aa).

The signal sequence occupies residues 1 to 18 (MKTISILAFLVLARLIEA). Disordered stretches follow at residues 142–300 (PKVE…GNVD), 423–528 (EEDE…SEQG), and 646–681 (ETVAPDTNSPDADQEQPDSVEPDNETTDAPINVEDD). The segment covering 147 to 165 (EEEEEEYDGEEDDDDESLT) has biased composition (acidic residues). Low complexity-rich tracts occupy residues 183–197 (VEPSTTTESAISTTE) and 205–266 (STTV…SSTT). 2 N-linked (GlcNAc...) asparagine glycosylation sites follow: asparagine 232 and asparagine 241. Residues 423–432 (EEDEIDETET) are compositionally biased toward acidic residues. The span at 433-451 (TESTKTTETTKTTGPAETT) shows a compositional bias: low complexity. Residues asparagine 461 and asparagine 511 are each glycosylated (N-linked (GlcNAc...) asparagine). Residues 500-511 (PIDESTESEEPN) show a composition bias toward acidic residues. Low complexity predominate over residues 512-528 (ESVTVTGDTTTDTSEQG). The segment covering 646-656 (ETVAPDTNSPD) has biased composition (polar residues). The span at 657 to 671 (ADQEQPDSVEPDNET) shows a compositional bias: acidic residues. Residue asparagine 669 is glycosylated (N-linked (GlcNAc...) asparagine). Asparagine 719 carries GPI-anchor amidated asparagine lipidation. Residues 720 to 741 (AANLAGSISLSSGVLLLILMLI) constitute a propeptide, removed in mature form.

The protein resides in the cell membrane. This is an uncharacterized protein from Candida albicans (strain SC5314 / ATCC MYA-2876) (Yeast).